The primary structure comprises 148 residues: D-aminoacyl-tRNA deacylase (148 aa).

The Gly-cisPro motif, important for rejection of L-amino acids motif lies at 136-137 (GP).

It belongs to the DTD family. As to quaternary structure, homodimer.

The protein resides in the cytoplasm. The enzyme catalyses glycyl-tRNA(Ala) + H2O = tRNA(Ala) + glycine + H(+). The catalysed reaction is a D-aminoacyl-tRNA + H2O = a tRNA + a D-alpha-amino acid + H(+). An aminoacyl-tRNA editing enzyme that deacylates mischarged D-aminoacyl-tRNAs. Also deacylates mischarged glycyl-tRNA(Ala), protecting cells against glycine mischarging by AlaRS. Acts via tRNA-based rather than protein-based catalysis; rejects L-amino acids rather than detecting D-amino acids in the active site. By recycling D-aminoacyl-tRNA to D-amino acids and free tRNA molecules, this enzyme counteracts the toxicity associated with the formation of D-aminoacyl-tRNA entities in vivo and helps enforce protein L-homochirality. The polypeptide is D-aminoacyl-tRNA deacylase (Kosmotoga olearia (strain ATCC BAA-1733 / DSM 21960 / TBF 19.5.1)).